The chain runs to 445 residues: Inositol-pentakisphosphate 2-kinase IPK1 (445 aa).

ATP is bound by residues 19 to 22 (GAAN) and Arg40. Position 127 (Arg127) interacts with substrate. ATP is bound by residues 144 to 146 (SDH) and 162 to 164 (EIK). Positions 162 to 166 (EIKAK) match the EXKPK motif motif. Substrate-binding residues include Lys166, Lys196, and Asn234. ATP is bound at residue Arg237. Residues His312, Cys322, Cys325, and His341 each contribute to the Zn(2+) site. Residue Asp363 participates in substrate binding. Residue Asp402 coordinates ATP. Residues Lys406, Lys410, and Tyr414 each coordinate substrate.

The protein belongs to the IPK1 type 2 family. Zn(2+) serves as cofactor.

The catalysed reaction is 1D-myo-inositol 1,3,4,5,6-pentakisphosphate + ATP = 1D-myo-inositol hexakisphosphate + ADP + H(+). Functionally, phosphorylates Ins(1,3,4,5,6)P5 at position 2 to form Ins(1,2,3,4,5,6)P6 (InsP6 or phytate). Phytate is a regulator of intracellular signaling, a highly abundant animal antinutrient, and a phosphate store in plant seeds. Also phosphorylates Ins(1,3,4,6)P4 and Ins(1,4,5,6)P4 to produce Ins(1,2,3,4,6)P5 and Ins(1,2,4,5,6)P5. The chain is Inositol-pentakisphosphate 2-kinase IPK1 from Oryza sativa subsp. indica (Rice).